The chain runs to 121 residues: Flagellar hook-basal body complex protein FliE (121 aa).

Belongs to the FliE family.

The protein resides in the bacterial flagellum basal body. The sequence is that of Flagellar hook-basal body complex protein FliE from Treponema denticola (strain ATCC 35405 / DSM 14222 / CIP 103919 / JCM 8153 / KCTC 15104).